Here is a 306-residue protein sequence, read N- to C-terminus: Methylated RNA-binding protein 1 (306 aa).

The YTH domain maps to 155–290 (SRFFVIKSSS…SIGISIINLF (136 aa)). RNA contacts are provided by residues 161 to 163 (KSS), Asn207, and Trp231.

In terms of biological role, RNA-binding protein that acts as a post-transcriptional regulator of phosphate metabolism by binding to the 3'-UTR region of PHO4 mRNA, decreasing its stability. Acts by recognizing and binding N6-methyladenosine (m6A)-containing RNAs, a modification present at internal sites of mRNAs and some non-coding RNAs. In Saccharomyces cerevisiae (strain ATCC 204508 / S288c) (Baker's yeast), this protein is Methylated RNA-binding protein 1.